Here is a 421-residue protein sequence, read N- to C-terminus: Phosphoribosylamine--glycine ligase (421 aa).

Residues 108 to 314 (KEIMVKYNVP…FAQNIDDIMM (207 aa)) form the ATP-grasp domain. Position 134 to 195 (134 to 195 (IEEQGAPIVV…EEFLDGEEFS (62 aa))) interacts with ATP. E284 and N286 together coordinate Mg(2+).

The protein belongs to the GARS family. Requires Mg(2+) as cofactor. It depends on Mn(2+) as a cofactor.

The enzyme catalyses 5-phospho-beta-D-ribosylamine + glycine + ATP = N(1)-(5-phospho-beta-D-ribosyl)glycinamide + ADP + phosphate + H(+). It functions in the pathway purine metabolism; IMP biosynthesis via de novo pathway; N(1)-(5-phospho-D-ribosyl)glycinamide from 5-phospho-alpha-D-ribose 1-diphosphate: step 2/2. The chain is Phosphoribosylamine--glycine ligase from Streptococcus pyogenes serotype M3 (strain SSI-1).